The primary structure comprises 430 residues: Ribosomal protein uS12 methylthiotransferase RimO (430 aa).

Residues 2–119 (ISVYSISLGC…WPAMLAHALK (118 aa)) enclose the MTTase N-terminal domain. [4Fe-4S] cluster is bound by residues Cys11, Cys46, Cys81, Cys145, Cys149, and Cys152. A Radical SAM core domain is found at 131 to 361 (STGPSYAWLK…MEVQAEISEE (231 aa)). One can recognise a TRAM domain in the interval 364 to 430 (AVHEGTRQQV…TRTYDLVALA (67 aa)).

This sequence belongs to the methylthiotransferase family. RimO subfamily. Requires [4Fe-4S] cluster as cofactor.

It is found in the cytoplasm. The catalysed reaction is L-aspartate(89)-[ribosomal protein uS12]-hydrogen + (sulfur carrier)-SH + AH2 + 2 S-adenosyl-L-methionine = 3-methylsulfanyl-L-aspartate(89)-[ribosomal protein uS12]-hydrogen + (sulfur carrier)-H + 5'-deoxyadenosine + L-methionine + A + S-adenosyl-L-homocysteine + 2 H(+). Catalyzes the methylthiolation of an aspartic acid residue of ribosomal protein uS12. In Nitratidesulfovibrio vulgaris (strain ATCC 29579 / DSM 644 / CCUG 34227 / NCIMB 8303 / VKM B-1760 / Hildenborough) (Desulfovibrio vulgaris), this protein is Ribosomal protein uS12 methylthiotransferase RimO.